Here is a 467-residue protein sequence, read N- to C-terminus: 2-succinylbenzoate--CoA ligase (467 aa).

This sequence belongs to the ATP-dependent AMP-binding enzyme family. MenE subfamily.

The catalysed reaction is 2-succinylbenzoate + ATP + CoA = 2-succinylbenzoyl-CoA + AMP + diphosphate. The protein operates within quinol/quinone metabolism; 1,4-dihydroxy-2-naphthoate biosynthesis; 1,4-dihydroxy-2-naphthoate from chorismate: step 5/7. Its pathway is quinol/quinone metabolism; menaquinone biosynthesis. Its function is as follows. Converts 2-succinylbenzoate (OSB) to 2-succinylbenzoyl-CoA (OSB-CoA). The sequence is that of 2-succinylbenzoate--CoA ligase from Listeria monocytogenes serovar 1/2a (strain ATCC BAA-679 / EGD-e).